The sequence spans 104 residues: Large ribosomal subunit protein bL21 (104 aa).

It belongs to the bacterial ribosomal protein bL21 family. Part of the 50S ribosomal subunit. Contacts protein L20.

In terms of biological role, this protein binds to 23S rRNA in the presence of protein L20. The protein is Large ribosomal subunit protein bL21 of Francisella tularensis subsp. tularensis (strain FSC 198).